Consider the following 475-residue polypeptide: Sulfate adenylyltransferase subunit 1 (475 aa).

The region spanning 25–239 is the tr-type G domain; sequence KSLLRFLTCG…EVLETVEIQR (215 aa). The G1 stretch occupies residues 34–41; it reads GSVDDGKS. Position 34 to 41 (34 to 41) interacts with GTP; sequence GSVDDGKS. Residues 92–96 form a G2 region; that stretch reads GITID. The G3 stretch occupies residues 113 to 116; the sequence is DTPG. GTP contacts are provided by residues 113–117 and 168–171; these read DTPGH and NKMD. The tract at residues 168 to 171 is G4; sequence NKMD. Residues 206-208 form a G5 region; sequence SAL.

Belongs to the TRAFAC class translation factor GTPase superfamily. Classic translation factor GTPase family. CysN/NodQ subfamily. As to quaternary structure, heterodimer composed of CysD, the smaller subunit, and CysN.

It carries out the reaction sulfate + ATP + H(+) = adenosine 5'-phosphosulfate + diphosphate. It functions in the pathway sulfur metabolism; hydrogen sulfide biosynthesis; sulfite from sulfate: step 1/3. Functionally, with CysD forms the ATP sulfurylase (ATPS) that catalyzes the adenylation of sulfate producing adenosine 5'-phosphosulfate (APS) and diphosphate, the first enzymatic step in sulfur assimilation pathway. APS synthesis involves the formation of a high-energy phosphoric-sulfuric acid anhydride bond driven by GTP hydrolysis by CysN coupled to ATP hydrolysis by CysD. This Shigella sonnei (strain Ss046) protein is Sulfate adenylyltransferase subunit 1.